Reading from the N-terminus, the 675-residue chain is Methionine--tRNA ligase (675 aa).

The short motif at 15 to 25 is the 'HIGH' region element; it reads PYANGSIHLGH. Residues Cys146, Cys149, Cys159, and Cys162 each contribute to the Zn(2+) site. The short motif at 332–336 is the 'KMSKS' region element; that stretch reads KMSKS. An ATP-binding site is contributed by Lys335. A tRNA-binding domain is found at 573 to 675; sequence DFAKVDMRIA…SGAQPGMQVK (103 aa).

The protein belongs to the class-I aminoacyl-tRNA synthetase family. MetG type 1 subfamily. As to quaternary structure, homodimer. The cofactor is Zn(2+).

It localises to the cytoplasm. It carries out the reaction tRNA(Met) + L-methionine + ATP = L-methionyl-tRNA(Met) + AMP + diphosphate. Its function is as follows. Is required not only for elongation of protein synthesis but also for the initiation of all mRNA translation through initiator tRNA(fMet) aminoacylation. This is Methionine--tRNA ligase from Yersinia pseudotuberculosis serotype I (strain IP32953).